A 356-amino-acid chain; its full sequence is Nitric oxide synthase oxygenase (356 aa).

Cys-63 is a heme binding site.

This sequence belongs to the NOS family. Bacterial NOS oxygenase subfamily. In terms of assembly, homodimer. Forms a complex with trpS2; one homodimer of trpS2 binds one homodimer of nos. Requires heme as cofactor. (6S)-5,6,7,8-tetrahydrofolate serves as cofactor.

It carries out the reaction 3 reduced [flavodoxin] + 2 L-arginine + 4 O2 = 3 oxidized [flavodoxin] + 2 L-citrulline + 2 nitric oxide + 4 H2O + 5 H(+). Its activity is regulated as follows. Nitric oxide synthase activity is increased by trpS2. Catalyzes the production of nitric oxide. The complex between TrpRS II and nitric oxide synthase oxygenase catalyzes the regioselective nitration of tryptophan at the 4-position. This is Nitric oxide synthase oxygenase (nos) from Deinococcus radiodurans (strain ATCC 13939 / DSM 20539 / JCM 16871 / CCUG 27074 / LMG 4051 / NBRC 15346 / NCIMB 9279 / VKM B-1422 / R1).